A 306-amino-acid polypeptide reads, in one-letter code: Dihydroorotate dehydrogenase B (NAD(+)), catalytic subunit (306 aa).

FMN contacts are provided by residues Ser22 and 46 to 47 (KT). Substrate-binding positions include Lys46, 70–74 (NSIGL), and Asn128. Asn128 contributes to the FMN binding site. The active-site Nucleophile is the Cys131. Residue Lys164 participates in FMN binding. 191–192 (NT) contacts substrate. Residues Gly216, 242–243 (GG), and 264–265 (GS) contribute to the FMN site.

It belongs to the dihydroorotate dehydrogenase family. Type 1 subfamily. As to quaternary structure, heterotetramer of 2 PyrK and 2 PyrD type B subunits. FMN is required as a cofactor.

It localises to the cytoplasm. The enzyme catalyses (S)-dihydroorotate + NAD(+) = orotate + NADH + H(+). Its pathway is pyrimidine metabolism; UMP biosynthesis via de novo pathway; orotate from (S)-dihydroorotate (NAD(+) route): step 1/1. In terms of biological role, catalyzes the conversion of dihydroorotate to orotate with NAD(+) as electron acceptor. The chain is Dihydroorotate dehydrogenase B (NAD(+)), catalytic subunit (pyrD) from Endomicrobium trichonymphae.